A 183-amino-acid polypeptide reads, in one-letter code: Transcription termination/antitermination protein NusG (183 aa).

The KOW domain occupies 131 to 161 (PGEEVRVTEGPFADFNGTVEEVDYEKGRLKV).

This sequence belongs to the NusG family.

In terms of biological role, participates in transcription elongation, termination and antitermination. The chain is Transcription termination/antitermination protein NusG from Pasteurella multocida (strain Pm70).